Here is a 182-residue protein sequence, read N- to C-terminus: MEPLSLTVYDRNIWHLFKKEEGAPQAMFPTNIKYIFEDDDDVADVDDLVFQQQQPDSELENVIIVEIDGAGQLENVELISDQYEMLSYRRERPVSLASQRSLSWLTSGNDTGGDAGKKSGDISDPAAGPDVPREAPLSIELELVSEFKDYRNLNLEDLKLDELTRIFCIQNKQLQMISDALN.

The disordered stretch occupies residues 105-134; sequence LTSGNDTGGDAGKKSGDISDPAAGPDVPRE.

The protein localises to the cytoplasm. The protein resides in the cytoskeleton. It localises to the preautophagosomal structure. In terms of biological role, plays a role in starvation-induced autophagy. Involved in mitophagy. Functions with ATG17 and ATG29 at the preautophagosomal structure (PAS) in order to form normal autophagosomes under starvation conditions. May be involved in microtubule function, such as chromosome segregation and karyogamy. The sequence is that of Autophagy-related protein 31 (CIS1) from Candida glabrata (strain ATCC 2001 / BCRC 20586 / JCM 3761 / NBRC 0622 / NRRL Y-65 / CBS 138) (Yeast).